Consider the following 233-residue polypeptide: ATP-dependent dethiobiotin synthetase BioD (233 aa).

Residue 12–17 participates in ATP binding; the sequence is GVGKTI. Thr-16 is a binding site for Mg(2+). The active site involves Lys-37. A substrate-binding site is contributed by Ser-41. Residues Asp-51, 112–115, and 202–204 contribute to the ATP site; these read EGAG and PKL. Positions 51 and 112 each coordinate Mg(2+).

It belongs to the dethiobiotin synthetase family. As to quaternary structure, homodimer. It depends on Mg(2+) as a cofactor.

Its subcellular location is the cytoplasm. The enzyme catalyses (7R,8S)-7,8-diammoniononanoate + CO2 + ATP = (4R,5S)-dethiobiotin + ADP + phosphate + 3 H(+). The protein operates within cofactor biosynthesis; biotin biosynthesis; biotin from 7,8-diaminononanoate: step 1/2. In terms of biological role, catalyzes a mechanistically unusual reaction, the ATP-dependent insertion of CO2 between the N7 and N8 nitrogen atoms of 7,8-diaminopelargonic acid (DAPA, also called 7,8-diammoniononanoate) to form a ureido ring. In Bacillus velezensis (strain DSM 23117 / BGSC 10A6 / LMG 26770 / FZB42) (Bacillus amyloliquefaciens subsp. plantarum), this protein is ATP-dependent dethiobiotin synthetase BioD.